A 280-amino-acid chain; its full sequence is Late embryogenesis abundant protein M17 (280 aa).

A signal peptide spans 1–22 (MGNLKSLVLLALLFSFSVAVFA). Asn-23 carries N-linked (GlcNAc...) asparagine glycosylation. 2 tandem repeats follow at residues 76 to 97 (GGCR…CCRS) and 131 to 152 (GGCR…CCRS). Positions 76 to 262 (GGCRWGCCGG…RGRCRYCCRS (187 aa)) are 4 X 22 AA repeats, Cys-rich. Positions 163–184 (VEPNDVEPQQGGRGGGGGGGGG) are disordered. Over residues 173 to 184 (GGRGGGGGGGGG) the composition is skewed to gly residues. Repeat 3 spans residues 186–207 (GGCRWGCCGGWWRGRCRYCCRS). Residues 218–239 (VEPNDVEPQQGGRGGGGGGGGG) are disordered. The span at 228 to 239 (GGRGGGGGGGGG) shows a compositional bias: gly residues. Repeat 4 spans residues 241–262 (GGCRWGCCGGWWRGRCRYCCRS).

Functionally, may be involved in the acquisition of desiccation tolerance during late phase of embryogenesis. The sequence is that of Late embryogenesis abundant protein M17 from Arabidopsis thaliana (Mouse-ear cress).